Consider the following 75-residue polypeptide: Protein RegB (75 aa).

Required for optimal exotoxin A production. This Pseudomonas aeruginosa (strain ATCC 15692 / DSM 22644 / CIP 104116 / JCM 14847 / LMG 12228 / 1C / PRS 101 / PAO1) protein is Protein RegB (regB).